Here is a 317-residue protein sequence, read N- to C-terminus: Methionyl-tRNA formyltransferase (317 aa).

113–116 serves as a coordination point for (6S)-5,6,7,8-tetrahydrofolate; that stretch reads SLLP.

The protein belongs to the Fmt family.

It catalyses the reaction L-methionyl-tRNA(fMet) + (6R)-10-formyltetrahydrofolate = N-formyl-L-methionyl-tRNA(fMet) + (6S)-5,6,7,8-tetrahydrofolate + H(+). Attaches a formyl group to the free amino group of methionyl-tRNA(fMet). The formyl group appears to play a dual role in the initiator identity of N-formylmethionyl-tRNA by promoting its recognition by IF2 and preventing the misappropriation of this tRNA by the elongation apparatus. The sequence is that of Methionyl-tRNA formyltransferase from Pseudomonas fluorescens (strain SBW25).